The following is a 459-amino-acid chain: Phosphoglucosamine mutase (459 aa).

S102 acts as the Phosphoserine intermediate in catalysis. Residues S102, D243, D245, and D247 each coordinate Mg(2+). Position 102 is a phosphoserine (S102).

The protein belongs to the phosphohexose mutase family. Requires Mg(2+) as cofactor. Post-translationally, activated by phosphorylation.

The enzyme catalyses alpha-D-glucosamine 1-phosphate = D-glucosamine 6-phosphate. Catalyzes the conversion of glucosamine-6-phosphate to glucosamine-1-phosphate. In Bartonella henselae (strain ATCC 49882 / DSM 28221 / CCUG 30454 / Houston 1) (Rochalimaea henselae), this protein is Phosphoglucosamine mutase.